The chain runs to 233 residues: Large ribosomal subunit protein uL1 (233 aa).

This sequence belongs to the universal ribosomal protein uL1 family. As to quaternary structure, part of the 50S ribosomal subunit.

In terms of biological role, binds directly to 23S rRNA. The L1 stalk is quite mobile in the ribosome, and is involved in E site tRNA release. Functionally, protein L1 is also a translational repressor protein, it controls the translation of the L11 operon by binding to its mRNA. In Geobacillus kaustophilus (strain HTA426), this protein is Large ribosomal subunit protein uL1.